The chain runs to 61 residues: Large ribosomal subunit protein bL28 (61 aa).

Belongs to the bacterial ribosomal protein bL28 family.

The sequence is that of Large ribosomal subunit protein bL28 from Geobacillus sp. (strain WCH70).